The following is a 541-amino-acid chain: Berberine bridge enzyme-like 1 (541 aa).

Residues 1–20 form the signal peptide; the sequence is MKLSCLVFLIVSSLVSSSLA. Residues Asn25, Asn38, Asn73, Asn136, Asn302, Asn339, and Asn357 are each glycosylated (N-linked (GlcNAc...) asparagine). Cys35 and Cys98 are oxidised to a cystine. The region spanning 76 to 255 is the FAD-binding PCMH-type domain; sequence TSPKPLLVIA…LSFKIKLVPV (180 aa). The segment at residues 113–180 is a cross-link (6-(S-cysteinyl)-8alpha-(pros-histidyl)-FAD (His-Cys)); sequence HDYDGVSYIS…GTHGFPAGVC (68 aa).

Belongs to the oxygen-dependent FAD-linked oxidoreductase family. It depends on FAD as a cofactor. The FAD cofactor is bound via a bicovalent 6-S-cysteinyl, 8alpha-N1-histidyl FAD linkage. Accumulates in cell walls of etiolated hypocotyls.

The protein resides in the secreted. It is found in the cell wall. This Arabidopsis thaliana (Mouse-ear cress) protein is Berberine bridge enzyme-like 1.